The chain runs to 391 residues: Adaptive-response sensory kinase SasA (391 aa).

A Histidine kinase domain is found at 169–391; it reads MLAHDLRSPL…CFHFTLPVCR (223 aa). His172 carries the phosphohistidine; by autocatalysis modification.

Homooligomerizes. Interacts with KaiC. Participates in the KaiABC clock complex, whose core is composed of a KaiC homohexamer, 6 KaiB and up to 6 KaiA dimers. SasA and KaiB(fs) compete to bind to KaiC.

It carries out the reaction ATP + protein L-histidine = ADP + protein N-phospho-L-histidine.. In terms of biological role, member of the two-component regulatory system SasA/RpaA involved in genome-wide circadian gene expression. One of several clock output pathways. Participates in the Kai clock protein complex, the main circadian regulator in cyanobacteria, via its interaction with KaiC. KaiC enhances the autophosphorylation activity of SasA, which then transfers its phosphate group to RpaA to activate it. In addition to its output function, recruits fold-shifted KaiB (KaiB(fs)) to KaiC to cooperatively form the KaiB(6):KaiC(6) complex (independent of SasA kinase activity). Required for robustness of the circadian rhythm of gene expression and is involved in clock output, also required for adaptation to light/dark cycles. This Rippkaea orientalis (strain PCC 8801 / RF-1) (Cyanothece sp. (strain PCC 8801)) protein is Adaptive-response sensory kinase SasA.